The sequence spans 341 residues: tRNA N6-adenosine threonylcarbamoyltransferase (341 aa).

Histidine 119 and histidine 123 together coordinate Fe cation. Substrate contacts are provided by residues 141-145 (MVSGG), aspartate 174, glycine 187, and asparagine 279. Residue aspartate 307 coordinates Fe cation.

It belongs to the KAE1 / TsaD family. It depends on Fe(2+) as a cofactor.

It localises to the cytoplasm. The catalysed reaction is L-threonylcarbamoyladenylate + adenosine(37) in tRNA = N(6)-L-threonylcarbamoyladenosine(37) in tRNA + AMP + H(+). In terms of biological role, required for the formation of a threonylcarbamoyl group on adenosine at position 37 (t(6)A37) in tRNAs that read codons beginning with adenine. Is involved in the transfer of the threonylcarbamoyl moiety of threonylcarbamoyl-AMP (TC-AMP) to the N6 group of A37, together with TsaE and TsaB. TsaD likely plays a direct catalytic role in this reaction. This Oenococcus oeni (strain ATCC BAA-331 / PSU-1) protein is tRNA N6-adenosine threonylcarbamoyltransferase.